We begin with the raw amino-acid sequence, 283 residues long: MTLPAFITWDFDPVLFTLFGHPIVWYGLLFALGLIILGPWIEKKMWEHEKLDSKWFESLAVYVFVGTIVGARLGHVLFYDPAYYLANPAKIFVTWEGGLASHGGTIGIIIACWLYSRRVTRKSILWVLDRLAVPTGIVAAMIRLGNLTNSEIFGRPTTLPWGFRFIRSEEYRHLVPNMDMGCHPTQIYEALCYLAVFALCMWLYWKRDAARRYSGLIVGVFLTGIFLSRFIIERIKIVQEPWELKLIESVGLNMGQLLSIPFVLAGIWLIIRAVKNPITQKLS.

The next 7 membrane-spanning stretches (helical) occupy residues 18–38 (LFGH…IILG), 59–79 (LAVY…VLFY), 91–111 (IFVT…IIIA), 124–144 (ILWV…MIRL), 185–205 (TQIY…WLYW), 213–233 (YSGL…FIIE), and 251–271 (GLNM…WLII). Arg-143 contributes to the a 1,2-diacyl-sn-glycero-3-phospho-(1'-sn-glycerol) binding site.

The protein belongs to the Lgt family.

It localises to the cell inner membrane. It catalyses the reaction L-cysteinyl-[prolipoprotein] + a 1,2-diacyl-sn-glycero-3-phospho-(1'-sn-glycerol) = an S-1,2-diacyl-sn-glyceryl-L-cysteinyl-[prolipoprotein] + sn-glycerol 1-phosphate + H(+). It functions in the pathway protein modification; lipoprotein biosynthesis (diacylglyceryl transfer). Catalyzes the transfer of the diacylglyceryl group from phosphatidylglycerol to the sulfhydryl group of the N-terminal cysteine of a prolipoprotein, the first step in the formation of mature lipoproteins. This is Phosphatidylglycerol--prolipoprotein diacylglyceryl transferase from Porphyromonas gingivalis (strain ATCC 33277 / DSM 20709 / CIP 103683 / JCM 12257 / NCTC 11834 / 2561).